The following is a 665-amino-acid chain: tRNA 5-methylaminomethyl-2-thiouridine biosynthesis bifunctional protein MnmC (665 aa).

The segment at 1–243 (MSQTSLHHAR…KWAMLAGERV (243 aa)) is tRNA (mnm(5)s(2)U34)-methyltransferase. Positions 268–665 (IGGGIASAMT…RKLLKGKPLN (398 aa)) are FAD-dependent cmnm(5)s(2)U34 oxidoreductase.

In the N-terminal section; belongs to the methyltransferase superfamily. tRNA (mnm(5)s(2)U34)-methyltransferase family. It in the C-terminal section; belongs to the DAO family. It depends on FAD as a cofactor.

The protein resides in the cytoplasm. It catalyses the reaction 5-aminomethyl-2-thiouridine(34) in tRNA + S-adenosyl-L-methionine = 5-methylaminomethyl-2-thiouridine(34) in tRNA + S-adenosyl-L-homocysteine + H(+). Its function is as follows. Catalyzes the last two steps in the biosynthesis of 5-methylaminomethyl-2-thiouridine (mnm(5)s(2)U) at the wobble position (U34) in tRNA. Catalyzes the FAD-dependent demodification of cmnm(5)s(2)U34 to nm(5)s(2)U34, followed by the transfer of a methyl group from S-adenosyl-L-methionine to nm(5)s(2)U34, to form mnm(5)s(2)U34. This chain is tRNA 5-methylaminomethyl-2-thiouridine biosynthesis bifunctional protein MnmC, found in Aeromonas salmonicida (strain A449).